A 279-amino-acid polypeptide reads, in one-letter code: Acyl-[acyl-carrier-protein]--UDP-N-acetylglucosamine O-acyltransferase (279 aa).

This sequence belongs to the transferase hexapeptide repeat family. LpxA subfamily. As to quaternary structure, homotrimer.

The protein localises to the cytoplasm. It carries out the reaction a (3R)-hydroxyacyl-[ACP] + UDP-N-acetyl-alpha-D-glucosamine = a UDP-3-O-[(3R)-3-hydroxyacyl]-N-acetyl-alpha-D-glucosamine + holo-[ACP]. It participates in glycolipid biosynthesis; lipid IV(A) biosynthesis; lipid IV(A) from (3R)-3-hydroxytetradecanoyl-[acyl-carrier-protein] and UDP-N-acetyl-alpha-D-glucosamine: step 1/6. Involved in the biosynthesis of lipid A, a phosphorylated glycolipid that anchors the lipopolysaccharide to the outer membrane of the cell. This is Acyl-[acyl-carrier-protein]--UDP-N-acetylglucosamine O-acyltransferase from Chlamydia pneumoniae (Chlamydophila pneumoniae).